The primary structure comprises 100 residues: Putative sodium channel toxin Ts26 (100 aa).

An N-terminal signal peptide occupies residues 1–22; the sequence is MVKSAMKIVILILFVLLIRVES. Residues 24-92 form the LCN-type CS-alpha/beta domain; that stretch reads RNGYPDISDG…VMDTTIEYCE (69 aa). Disulfide bonds link C38–C64, C50–C69, C54–C71, and C65–C91.

This sequence belongs to the long (4 C-C) scorpion toxin superfamily. Sodium channel inhibitor family. In terms of tissue distribution, expressed by the venom gland.

The protein localises to the secreted. Putative sodium channel toxin. The protein is Putative sodium channel toxin Ts26 of Tityus serrulatus (Brazilian scorpion).